The following is a 120-amino-acid chain: Large ribosomal subunit protein uL18 (120 aa).

This sequence belongs to the universal ribosomal protein uL18 family. Part of the 50S ribosomal subunit; part of the 5S rRNA/L5/L18/L25 subcomplex. Contacts the 5S and 23S rRNAs.

Its function is as follows. This is one of the proteins that bind and probably mediate the attachment of the 5S RNA into the large ribosomal subunit, where it forms part of the central protuberance. The chain is Large ribosomal subunit protein uL18 from Clostridium novyi (strain NT).